The chain runs to 101 residues: Small ribosomal subunit protein bS18c (101 aa).

This sequence belongs to the bacterial ribosomal protein bS18 family. In terms of assembly, part of the 30S ribosomal subunit.

Its subcellular location is the plastid. It localises to the chloroplast. The polypeptide is Small ribosomal subunit protein bS18c (Citrus sinensis (Sweet orange)).